The sequence spans 332 residues: MLMTRPNLKGRSFLAEKDFTQEELLYFLDLAAELKEKKKNGIPHHYLEGKNVALLFEKTSTRTRCAFTVACTDLGANPEYLGKGDIQLGKKESVEDTAKVLGRMFDGIEFRGFNHETVESLAQNSGVPVWNGLTDMWHPTQTLADLLTIREHIGKLKNVKLVYVGDGRNNVANSLLVGGAIVGMDVRICTPESLWPAQEVIDLAKKYNEQVMITSNVEEAVANADVIYTDVWVSMGEEEKFAERVELLKPYQVNMKMIKATGNENVIFLHCLPAFHDVETMYGEEVYEKYGLKEMEVTDEVFRSKHSKVFDQAENRMHTIKAVMAATLGNME.

Residues Ser-60–Thr-63, Gln-87, Arg-111, and His-138–Gln-141 each bind carbamoyl phosphate. Residues Asn-170, Asp-230, and Ser-234–Met-235 contribute to the L-ornithine site. Residues Cys-271 to Leu-272 and Arg-316 each bind carbamoyl phosphate.

The protein belongs to the aspartate/ornithine carbamoyltransferase superfamily. OTCase family.

It localises to the cytoplasm. The catalysed reaction is carbamoyl phosphate + L-ornithine = L-citrulline + phosphate + H(+). It functions in the pathway amino-acid degradation; L-arginine degradation via ADI pathway; carbamoyl phosphate from L-arginine: step 2/2. Functionally, reversibly catalyzes the transfer of the carbamoyl group from carbamoyl phosphate (CP) to the N(epsilon) atom of ornithine (ORN) to produce L-citrulline. This chain is Ornithine carbamoyltransferase, catabolic (arcB), found in Bacillus cereus (strain ATCC 14579 / DSM 31 / CCUG 7414 / JCM 2152 / NBRC 15305 / NCIMB 9373 / NCTC 2599 / NRRL B-3711).